Reading from the N-terminus, the 254-residue chain is Pimeloyl-[acyl-carrier protein] methyl ester esterase (254 aa).

One can recognise an AB hydrolase-1 domain in the interval 16 to 242; it reads LVLIHGWGMN…ASHAPFISHP (227 aa). Residues W22, 82-83, and 143-147 contribute to the substrate site; these read SL and FLALQ. The Nucleophile role is filled by S82. Catalysis depends on residues D207 and H235. A substrate-binding site is contributed by H235.

Belongs to the AB hydrolase superfamily. Carboxylesterase BioH family. In terms of assembly, monomer.

Its subcellular location is the cytoplasm. The enzyme catalyses 6-carboxyhexanoyl-[ACP] methyl ester + H2O = 6-carboxyhexanoyl-[ACP] + methanol + H(+). Its pathway is cofactor biosynthesis; biotin biosynthesis. Functionally, the physiological role of BioH is to remove the methyl group introduced by BioC when the pimeloyl moiety is complete. It allows to synthesize pimeloyl-ACP via the fatty acid synthetic pathway through the hydrolysis of the ester bonds of pimeloyl-ACP esters. In Photobacterium profundum (strain SS9), this protein is Pimeloyl-[acyl-carrier protein] methyl ester esterase.